The sequence spans 212 residues: Imidazole glycerol phosphate synthase subunit HisH (212 aa).

Residues 3-212 form the Glutamine amidotransferase type-1 domain; it reads TVAVIDYGMG…QNFAAWDGRW (210 aa). The active-site Nucleophile is C81. Active-site residues include H190 and E192.

Heterodimer of HisH and HisF.

The protein resides in the cytoplasm. The catalysed reaction is 5-[(5-phospho-1-deoxy-D-ribulos-1-ylimino)methylamino]-1-(5-phospho-beta-D-ribosyl)imidazole-4-carboxamide + L-glutamine = D-erythro-1-(imidazol-4-yl)glycerol 3-phosphate + 5-amino-1-(5-phospho-beta-D-ribosyl)imidazole-4-carboxamide + L-glutamate + H(+). It catalyses the reaction L-glutamine + H2O = L-glutamate + NH4(+). The protein operates within amino-acid biosynthesis; L-histidine biosynthesis; L-histidine from 5-phospho-alpha-D-ribose 1-diphosphate: step 5/9. Functionally, IGPS catalyzes the conversion of PRFAR and glutamine to IGP, AICAR and glutamate. The HisH subunit catalyzes the hydrolysis of glutamine to glutamate and ammonia as part of the synthesis of IGP and AICAR. The resulting ammonia molecule is channeled to the active site of HisF. The protein is Imidazole glycerol phosphate synthase subunit HisH of Pseudomonas syringae pv. syringae (strain B728a).